Here is a 438-residue protein sequence, read N- to C-terminus: Putative B3 domain-containing protein Os04g0676650 (438 aa).

Residues 1 to 11 (MADARGSSSSS) show a composition bias toward low complexity. 2 disordered regions span residues 1 to 30 (MADA…DFVG) and 225 to 285 (SSSH…MNQN). Residues 12 to 30 (GDGGGGEGKGGAGHGDFVG) show a composition bias toward gly residues. Positions 258–269 (RRSDMESEKNDD) are enriched in basic and acidic residues. Residues 272–285 (DQTPVSEPPSMNQN) are compositionally biased toward polar residues. The segment at residues 302 to 404 (LRKELTNSDV…KFVVRGEKAI (103 aa)) is a DNA-binding region (TF-B3).

It is found in the nucleus. In Oryza sativa subsp. japonica (Rice), this protein is Putative B3 domain-containing protein Os04g0676650.